The primary structure comprises 32 residues: TKXXEAPAPKGLKGNEMLKGIFLEVKKKFETA.

The protein localises to the mitochondrion. Its subcellular location is the mitochondrion inner membrane. In terms of biological role, mitochondrial membrane ATP synthase (F(1)F(0) ATP synthase or Complex V) produces ATP from ADP in the presence of a proton gradient across the membrane which is generated by electron transport complexes of the respiratory chain. F-type ATPases consist of two structural domains, F(1) - containing the extramembraneous catalytic core and F(0) - containing the membrane proton channel, linked together by a central stalk and a peripheral stalk. During catalysis, ATP synthesis in the catalytic domain of F(1) is coupled via a rotary mechanism of the central stalk subunits to proton translocation. Part of the complex F(0) domain. This chain is ATP synthase 28 kDa subunit, mitochondrial, found in Spinacia oleracea (Spinach).